A 728-amino-acid polypeptide reads, in one-letter code: Lutropin-choriogonadotropic hormone receptor (728 aa).

A signal peptide spans 1 to 19 (MLPALLPLLLPALLPGAGG). At 20–389 (GRCPQRCACT…DILGYSFLRV (370 aa)) the chain is on the extracellular side. 6 LRR repeats span residues 92–116 (LPAL…AFRN), 117–142 (LPRL…IFSS), 144–166 (AHFI…AFQG), 168–191 (SNES…AFNG), 193–215 (KLNQ…ALRG), and 216–239 (ATGP…GLEA). Residues 390 to 410 (LIWFINILALAGNFIVLLVLI) form a helical membrane-spanning segment. At 411–420 (TSHYKLTVPR) the chain is on the cytoplasmic side. The chain crosses the membrane as a helical span at residues 421 to 441 (FLMCNLSFADFCMGLYLLLIA). At 442 to 466 (SVDAQTSGQYYNHAIDWQTGSGCST) the chain is on the extracellular side. An intrachain disulfide couples Cys464 to Cys539. The helical transmembrane segment at 467–487 (AGFFTVFASELSVYTLTVITI) threads the bilayer. Residues 488–507 (ERWHTITYAMQLDRKLRLRH) lie on the Cytoplasmic side of the membrane. The chain crosses the membrane as a helical span at residues 508–528 (AVPIMLGGWVFSILIAVLPLL). At 529–551 (GVSSYMKVSICLPMDIETGLSQA) the chain is on the extracellular side. A helical transmembrane segment spans residues 552–572 (YILLILMLNVIAFLVICACYI). The Cytoplasmic segment spans residues 573–595 (KIYVAVQNPELVAANKDTKIAKR). A helical transmembrane segment spans residues 596 to 616 (MAILIFTDFTCMAPISFFAIS). Residues 617–630 (AAIKVPLITVTNSK) lie on the Extracellular side of the membrane. The helical transmembrane segment at 631 to 651 (ILLVLFYPVNSCANPFLYAIF) threads the bilayer. Topologically, residues 652–728 (TKAFQRDFFL…STKKSQPECQ (77 aa)) are cytoplasmic.

Belongs to the G-protein coupled receptor 1 family. FSH/LSH/TSH subfamily. Expressed in ovarian follicle granulosa cells. Expressed in ovarian follicle theca cells.

Its subcellular location is the cell membrane. Its function is as follows. Receptor for lutropin-choriogonadotropic hormone. The activity of this receptor is mediated by G proteins which activate adenylate cyclase. The polypeptide is Lutropin-choriogonadotropic hormone receptor (Gallus gallus (Chicken)).